An 823-amino-acid polypeptide reads, in one-letter code: Zygotic DNA replication licensing factor mcm6-A (823 aa).

The segment at 159–186 (CLDCQTLVRDVEQQFKYTQPSICRNPVC) adopts a C4-type zinc-finger fold. The MCM domain maps to 347 to 554 (LYHNLCTSLF…TDYAIARRIV (208 aa)). Position 397-404 (397-404 (GDPSTAKS)) interacts with ATP. The Arginine finger signature appears at 529 to 532 (SRFD). Residues 663 to 710 (PDVNLDQDDEHEPEDETQEGTNGDAEVPNGVNGHVNGINGHSQESNAA) form a disordered region. The segment covering 667 to 680 (LDQDDEHEPEDETQ) has biased composition (acidic residues). Over residues 691–703 (NGVNGHVNGINGH) the composition is skewed to low complexity.

This sequence belongs to the MCM family. In terms of assembly, component of the mcm2-7 complex (RLF-M). The complex forms a toroidal hexameric ring with the proposed subunit order mcm2-mcm6-mcm4-mcm7-mcm3-mcm5 (By simililarity). Begins to associate with zmcm3, mcm4 and mcm7 into mcm complexes at the neurula stage. May replace mmcm6 in the complex that functions during licensing of DNA replication.

Its subcellular location is the nucleus. The enzyme catalyses ATP + H2O = ADP + phosphate + H(+). Its function is as follows. Acts as a component of the mcm2-7 complex (mcm complex) which is the putative replicative helicase essential for 'once per cell cycle' DNA replication initiation and elongation in eukaryotic cells. The active ATPase sites in the mcm2-7 ring are formed through the interaction surfaces of two neighboring subunits such that a critical structure of a conserved arginine finger motif is provided in trans relative to the ATP-binding site of the Walker A box of the adjacent subunit. The six ATPase active sites, however, are likely to contribute differentially to the complex helicase activity. The existence of maternal and zygotic forms of mcm3 and mcm6 suggests that specific forms of mcm2-7 complexes may be used during different stages of development. May replace mmcm6 in the mcm2-7 complex. In Xenopus laevis (African clawed frog), this protein is Zygotic DNA replication licensing factor mcm6-A (zmcm6-a).